A 100-amino-acid polypeptide reads, in one-letter code: Integration host factor subunit alpha (100 aa).

The tract at residues 54 to 73 is disordered; sequence DLRDKRQRPGRNPKTGEEIP.

Belongs to the bacterial histone-like protein family. Heterodimer of an alpha and a beta chain.

This protein is one of the two subunits of integration host factor, a specific DNA-binding protein that functions in genetic recombination as well as in transcriptional and translational control. The sequence is that of Integration host factor subunit alpha from Pseudomonas savastanoi pv. phaseolicola (strain 1448A / Race 6) (Pseudomonas syringae pv. phaseolicola (strain 1448A / Race 6)).